Here is a 202-residue protein sequence, read N- to C-terminus: ATP-dependent Clp protease proteolytic subunit (202 aa).

The active-site Nucleophile is Ser-101. The active site involves His-126.

Belongs to the peptidase S14 family. In terms of assembly, component of the chloroplastic Clp protease core complex.

The protein localises to the plastid. It is found in the chloroplast stroma. It carries out the reaction Hydrolysis of proteins to small peptides in the presence of ATP and magnesium. alpha-casein is the usual test substrate. In the absence of ATP, only oligopeptides shorter than five residues are hydrolyzed (such as succinyl-Leu-Tyr-|-NHMec, and Leu-Tyr-Leu-|-Tyr-Trp, in which cleavage of the -Tyr-|-Leu- and -Tyr-|-Trp bonds also occurs).. Its function is as follows. Cleaves peptides in various proteins in a process that requires ATP hydrolysis. Has a chymotrypsin-like activity. Plays a major role in the degradation of misfolded proteins. The protein is ATP-dependent Clp protease proteolytic subunit of Illicium oligandrum (Star anise).